The primary structure comprises 406 residues: Corticosteroid-binding globulin (406 aa).

Positions 1–22 (MLLTLYACLLWLSTSGLWTSQA) are cleaved as a signal peptide. Residues Asn95, Asn119, and Asn223 are each glycosylated (N-linked (GlcNAc...) asparagine). Residue Gln253 coordinates cortisol. Asn259 carries N-linked (GlcNAc...) asparagine glycosylation. Cortisol contacts are provided by Gln285 and Trp394.

This sequence belongs to the serpin family.

The protein localises to the secreted. Functionally, major transport protein for glucocorticoids and progestins in the blood of almost all vertebrate species. The polypeptide is Corticosteroid-binding globulin (Serpina6) (Sus scrofa (Pig)).